We begin with the raw amino-acid sequence, 542 residues long: Chaperonin GroEL (542 aa).

Residues 29-32 (TLGP), 86-90 (DGTTT), glycine 413, 476-478 (NAA), and aspartate 492 contribute to the ATP site.

The protein belongs to the chaperonin (HSP60) family. As to quaternary structure, forms a cylinder of 14 subunits composed of two heptameric rings stacked back-to-back. Interacts with the co-chaperonin GroES.

It localises to the cytoplasm. It carries out the reaction ATP + H2O + a folded polypeptide = ADP + phosphate + an unfolded polypeptide.. Functionally, together with its co-chaperonin GroES, plays an essential role in assisting protein folding. The GroEL-GroES system forms a nano-cage that allows encapsulation of the non-native substrate proteins and provides a physical environment optimized to promote and accelerate protein folding. The sequence is that of Chaperonin GroEL from Lactococcus lactis subsp. cremoris (strain MG1363).